Reading from the N-terminus, the 506-residue chain is Ribose import ATP-binding protein RbsA 2 (506 aa).

ABC transporter domains follow at residues 7-242 (LEMR…VGRP) and 250-497 (ERDI…TGVN). 39–46 (GENGAGKS) contributes to the ATP binding site.

Belongs to the ABC transporter superfamily. Ribose importer (TC 3.A.1.2.1) family. As to quaternary structure, the complex is composed of an ATP-binding protein (RbsA), two transmembrane proteins (RbsC) and a solute-binding protein (RbsB).

The protein resides in the cell inner membrane. The enzyme catalyses D-ribose(out) + ATP + H2O = D-ribose(in) + ADP + phosphate + H(+). In terms of biological role, part of the ABC transporter complex RbsABC involved in ribose import. Responsible for energy coupling to the transport system. This chain is Ribose import ATP-binding protein RbsA 2, found in Escherichia coli O157:H7.